A 364-amino-acid polypeptide reads, in one-letter code: Protein IncC (364 aa).

Basic and acidic residues-rich tracts occupy residues 1–10 (MGVIHEETAY), 26–42 (ADHR…EATG), and 89–100 (HRPEVGSGRQEK). Disordered regions lie at residues 1–63 (MGVI…ASRV) and 75–102 (VRAG…EKTG).

Belongs to the ParA family.

This is one of the proteins encoded by the trfB operon; it is involved in plasmid maintenance and replication. This chain is Protein IncC (incC), found in Escherichia coli.